Reading from the N-terminus, the 138-residue chain is Probable prefoldin subunit 4 (138 aa).

It belongs to the prefoldin subunit beta family. As to quaternary structure, heterohexamer of two PFD-alpha type and four PFD-beta type subunits.

Its function is as follows. Binds specifically to cytosolic chaperonin (c-CPN) and transfers target proteins to it. Binds to nascent polypeptide chain and promotes folding in an environment in which there are many competing pathways for nonnative proteins. This is Probable prefoldin subunit 4 from Drosophila melanogaster (Fruit fly).